We begin with the raw amino-acid sequence, 429 residues long: Histidine--tRNA ligase (429 aa).

The protein belongs to the class-II aminoacyl-tRNA synthetase family. Homodimer.

It is found in the cytoplasm. It carries out the reaction tRNA(His) + L-histidine + ATP = L-histidyl-tRNA(His) + AMP + diphosphate + H(+). The polypeptide is Histidine--tRNA ligase (Streptococcus pneumoniae (strain JJA)).